Consider the following 159-residue polypeptide: MTKVLVLSDTHGYNDRWLAVMKLHNPDVVIHAGDHLTTKKFMDQNATFWVAGNHDVVGEEIQMFELEGIQFVLMHGHQAPRHDLKQWYKMLVDQAKSYLCDVLIVGHSHIEHYETIDGIQVINPGSLEIPRNPRKLPTYCNLNLSQGRISDLTFHFPRD.

Asp-9, His-11, Asp-34, Asn-53, His-75, His-107, and His-109 together coordinate Mn(2+).

This sequence belongs to the metallophosphoesterase superfamily. YfcE family. Mn(2+) serves as cofactor.

The protein is Probable metallophosphoesterase MPN_126 of Mycoplasma pneumoniae (strain ATCC 29342 / M129 / Subtype 1) (Mycoplasmoides pneumoniae).